We begin with the raw amino-acid sequence, 366 residues long: MPNTFGHLFRITTWGESHGKGVGVVIDGCPPRIPLSEEDIQKELDRRRPGQSKITTQRKERDIAAILSGTFNGMTLGTPIMIWVKNEDARPEAYAEMEKIYRPSHADFTYQAKYGIRNWQGGGRSSARETIGRVAGGAVGGKVLQFLYPEIEVIAWVSEVHGLKSLCDPNTVTREDVESNILRWPNAENLGEALKEIERAQKEGDTVGGIVECIVRGMPVGLGEPVFDKLEADLAKAMLSLPASKGFEIGSGFRGALMRGSEHNDPFYMEGNKVRTKTNWSGGVQGGISNGENLYFRVAFKPVATIAQEQQTVSVDGEEVILRARGRHDPCVLPRAVPIVEAMTKLVLVDHALRQKAIELTPRSFS.

Arg47 lines the NADP(+) pocket. FMN is bound by residues 124-126 (RSS), Gly286, 301-305 (KPVAT), and Arg327.

It belongs to the chorismate synthase family. As to quaternary structure, homotetramer. Requires FMNH2 as cofactor.

The catalysed reaction is 5-O-(1-carboxyvinyl)-3-phosphoshikimate = chorismate + phosphate. It participates in metabolic intermediate biosynthesis; chorismate biosynthesis; chorismate from D-erythrose 4-phosphate and phosphoenolpyruvate: step 7/7. Its function is as follows. Catalyzes the anti-1,4-elimination of the C-3 phosphate and the C-6 proR hydrogen from 5-enolpyruvylshikimate-3-phosphate (EPSP) to yield chorismate, which is the branch point compound that serves as the starting substrate for the three terminal pathways of aromatic amino acid biosynthesis. This reaction introduces a second double bond into the aromatic ring system. The chain is Chorismate synthase from Methylacidiphilum infernorum (isolate V4) (Methylokorus infernorum (strain V4)).